The sequence spans 750 residues: Photosystem I P700 chlorophyll a apoprotein A1 (750 aa).

Transmembrane regions (helical) follow at residues 70-93 (VFSA…FHGA), 156-179 (LYCT…FHYH), 195-219 (LNHH…HVSL), 291-309 (IAHH…GHMY), 346-369 (WHAQ…HHMY), 385-411 (LSLF…IFMV), 433-455 (AIIS…LYIH), and 531-549 (FLVH…LILL). Cys-573 and Cys-582 together coordinate [4Fe-4S] cluster. Transmembrane regions (helical) follow at residues 589 to 610 (HVFL…HFSW) and 664 to 686 (LSAY…MFLF). Residue His-675 coordinates chlorophyll a'. 2 residues coordinate chlorophyll a: Met-683 and Tyr-691. Trp-692 serves as a coordination point for phylloquinone. A helical membrane pass occupies residues 724–744 (AVGVTHYLLGGIATTWAFFLA).

Belongs to the PsaA/PsaB family. As to quaternary structure, the PsaA/B heterodimer binds the P700 chlorophyll special pair and subsequent electron acceptors. PSI consists of a core antenna complex that captures photons, and an electron transfer chain that converts photonic excitation into a charge separation. The eukaryotic PSI reaction center is composed of at least 11 subunits. It depends on P700 is a chlorophyll a/chlorophyll a' dimer, A0 is one or more chlorophyll a, A1 is one or both phylloquinones and FX is a shared 4Fe-4S iron-sulfur center. as a cofactor.

Its subcellular location is the plastid. It is found in the chloroplast thylakoid membrane. The enzyme catalyses reduced [plastocyanin] + hnu + oxidized [2Fe-2S]-[ferredoxin] = oxidized [plastocyanin] + reduced [2Fe-2S]-[ferredoxin]. Functionally, psaA and PsaB bind P700, the primary electron donor of photosystem I (PSI), as well as the electron acceptors A0, A1 and FX. PSI is a plastocyanin-ferredoxin oxidoreductase, converting photonic excitation into a charge separation, which transfers an electron from the donor P700 chlorophyll pair to the spectroscopically characterized acceptors A0, A1, FX, FA and FB in turn. Oxidized P700 is reduced on the lumenal side of the thylakoid membrane by plastocyanin. This chain is Photosystem I P700 chlorophyll a apoprotein A1, found in Lepidium virginicum (Virginia pepperweed).